Here is a 207-residue protein sequence, read N- to C-terminus: Uridine kinase (207 aa).

Residue 13-20 (GASGSGKT) coordinates ATP.

It belongs to the uridine kinase family.

The protein localises to the cytoplasm. It carries out the reaction uridine + ATP = UMP + ADP + H(+). It catalyses the reaction cytidine + ATP = CMP + ADP + H(+). The protein operates within pyrimidine metabolism; CTP biosynthesis via salvage pathway; CTP from cytidine: step 1/3. It functions in the pathway pyrimidine metabolism; UMP biosynthesis via salvage pathway; UMP from uridine: step 1/1. The chain is Uridine kinase from Ureaplasma urealyticum serovar 10 (strain ATCC 33699 / Western).